The primary structure comprises 526 residues: Cytochrome P450 monooxygenase COX2 (526 aa).

An N-linked (GlcNAc...) asparagine glycan is attached at Asn11. A helical membrane pass occupies residues 12–31 (ITTNHVAAAVCAGIAVYAIV). Asn302 carries an N-linked (GlcNAc...) asparagine glycan. A heme-binding site is contributed by Cys450.

The protein belongs to the cytochrome P450 family. Requires heme as cofactor.

It is found in the membrane. Its pathway is secondary metabolite biosynthesis. Functionally, cytochrome P450 monooxygenase; part of the gene cluster that mediates the biosynthesis of alpha-cuprenene and oxidized derivatives. The alpha-cuprenene synthase COP6 is the only sesquiterpene synthase identified in C.cinereus that appears to be part of a biosynthetic gene cluster and is highly specific since it catalyzes the cyclization of (2E,6E)-farnesyl diphosphate into only one product, alpha-cuprenene. The cytochrome P450 monooxygenase COX2 then oxidizes the cyclohexadiene ring of alpha-cuprenene at positions 1 and 4, yielding first alpha-cuparene, followed by alpha-cuparophenol and a further yet unidentified compound resulting from one additional oxidation step. The cytochrome P450 monooxygenase COX1 then likely catalyzes the oxidation at position 9 of the pentane ring of alpha-cuprenene to give the corresponding hydroxy or ketone derivatives. In Coprinopsis cinerea (strain Okayama-7 / 130 / ATCC MYA-4618 / FGSC 9003) (Inky cap fungus), this protein is Cytochrome P450 monooxygenase COX2.